The sequence spans 334 residues: Spermidine synthase 1 (334 aa).

The interval 1–37 (MAAPENTLHSTDSPLKRQREDEVNGVSDTLSKEPQPN) is disordered. The span at 26-37 (VSDTLSKEPQPN) shows a compositional bias: polar residues. Positions 44–281 (PGWFSEISPM…GMIGFMLCST (238 aa)) constitute a PABS domain. S-adenosyl 3-(methylsulfanyl)propylamine is bound at residue Q75. Residue Y105 participates in putrescine binding. S-adenosyl 3-(methylsulfanyl)propylamine contacts are provided by residues Q106, D130, E150, 181–182 (DG), and D200. The Proton acceptor role is filled by D200. Residues 200-203 (DSSD) and Y269 each bind putrescine.

This sequence belongs to the spermidine/spermine synthase family.

It carries out the reaction S-adenosyl 3-(methylsulfanyl)propylamine + putrescine = S-methyl-5'-thioadenosine + spermidine + H(+). Its pathway is amine and polyamine biosynthesis; spermidine biosynthesis; spermidine from putrescine: step 1/1. The sequence is that of Spermidine synthase 1 (SPDSYN1) from Pisum sativum (Garden pea).